The following is an 85-amino-acid chain: Splicing factor 3B subunit 5 (85 aa).

Belongs to the SF3B5 family. In terms of assembly, component of the SF3B complex. SF3B complex associates with the splicing factor SF3A complex and a 12S RNA unit to form the U2 small nuclear ribonucleoproteins complex (U2 snRNP). Identified in the SAGA transcription regulatory histone acetylation (HAT) complex; the interaction is RNA-independent.

It is found in the nucleus. Involved in pre-mRNA splicing as component of spliceosome. As part of the spliceosome complex, plays a role in the regulation of spermatogonial differentiation. When associated with the SAGA transcription regulatory histone acetylation (HAT) complex, might be involved in the transcriptional activation of a subset of SAGA-regulated genes. The protein is Splicing factor 3B subunit 5 of Drosophila melanogaster (Fruit fly).